Reading from the N-terminus, the 31-residue chain is Cytochrome b6-f complex subunit 6 (31 aa).

Residues 4-24 form a helical membrane-spanning segment; that stretch reads ITSYFGFLLAALTITPALFIG.

Belongs to the PetL family. As to quaternary structure, the 4 large subunits of the cytochrome b6-f complex are cytochrome b6, subunit IV (17 kDa polypeptide, PetD), cytochrome f and the Rieske protein, while the 4 small subunits are PetG, PetL, PetM and PetN. The complex functions as a dimer.

The protein localises to the plastid. It is found in the chloroplast thylakoid membrane. Functionally, component of the cytochrome b6-f complex, which mediates electron transfer between photosystem II (PSII) and photosystem I (PSI), cyclic electron flow around PSI, and state transitions. PetL is important for photoautotrophic growth as well as for electron transfer efficiency and stability of the cytochrome b6-f complex. The sequence is that of Cytochrome b6-f complex subunit 6 from Saccharum barberi (Indian sugarcane).